Reading from the N-terminus, the 224-residue chain is Agamous-like MADS-box protein AGL9 homolog (224 aa).

In terms of domain architecture, MADS-box spans arginine 3–phenylalanine 57. Residues glutamate 89–leucine 179 enclose the K-box domain.

As to expression, flower specific.

Its subcellular location is the nucleus. In terms of biological role, probable transcription factor active in inflorescence development and floral organogenesis. The polypeptide is Agamous-like MADS-box protein AGL9 homolog (TDR5) (Solanum lycopersicum (Tomato)).